Reading from the N-terminus, the 104-residue chain is Large ribosomal subunit protein uL24 (104 aa).

It belongs to the universal ribosomal protein uL24 family. As to quaternary structure, part of the 50S ribosomal subunit.

In terms of biological role, one of two assembly initiator proteins, it binds directly to the 5'-end of the 23S rRNA, where it nucleates assembly of the 50S subunit. One of the proteins that surrounds the polypeptide exit tunnel on the outside of the subunit. The polypeptide is Large ribosomal subunit protein uL24 (Nitrobacter hamburgensis (strain DSM 10229 / NCIMB 13809 / X14)).